A 117-amino-acid polypeptide reads, in one-letter code: Modulator protein MzrA (117 aa).

At 1–11 (MMTNRRFRKPS) the chain is on the cytoplasmic side. A helical transmembrane segment spans residues 12–29 (AWRLLLLLLPLVVLLSMS). Topologically, residues 30–117 (SRRLPDEVML…SNGTSPVTRS (88 aa)) are periplasmic.

It belongs to the MzrA family. As to quaternary structure, interacts with EnvZ.

Its subcellular location is the cell inner membrane. Its function is as follows. Modulates the activity of the EnvZ/OmpR two-component regulatory system, probably by directly modulating EnvZ enzymatic activity and increasing stability of phosphorylated OmpR. This chain is Modulator protein MzrA, found in Dickeya dadantii (strain 3937) (Erwinia chrysanthemi (strain 3937)).